The chain runs to 329 residues: Alpha/beta hydrolase domain-containing protein 17C (329 aa).

Positions 53 to 79 (GASAPAPAQATAAAAAAQPAPQQPEEG) are enriched in low complexity. Residues 53-85 (GASAPAPAQATAAAAAAQPAPQQPEEGAGAGPG) form a disordered region. Residues S211, D276, and H305 each act as charge relay system in the active site.

The protein belongs to the AB hydrolase superfamily. ABHD17 family. Post-translationally, palmitoylated on cysteine residues located in a cysteine cluster at the N-terminus which promotes membrane localization. Palmitoylation is required for post-synaptic localization and for depalmitoylating activity towards DLG4/PSD95.

Its subcellular location is the recycling endosome membrane. The protein localises to the cell projection. It is found in the dendritic spine. It localises to the postsynaptic density membrane. The enzyme catalyses S-hexadecanoyl-L-cysteinyl-[protein] + H2O = L-cysteinyl-[protein] + hexadecanoate + H(+). Its activity is regulated as follows. Inhibited by palmostatin-B. Hydrolyzes fatty acids from S-acylated cysteine residues in proteins. Has depalmitoylating activity towards NRAS and DLG4/PSD95. In Homo sapiens (Human), this protein is Alpha/beta hydrolase domain-containing protein 17C.